Consider the following 1113-residue polypeptide: Protein translocase subunit SecA (1113 aa).

Residues Gln-175, 193–197 (GEGKT), and Asp-694 each bind ATP. The span at 1042–1072 (RHAAEQRTDMSKYRTQKDDIEAQQKAQRDAA) shows a compositional bias: basic and acidic residues. A disordered region spans residues 1042 to 1113 (RHAAEQRTDM…KFKQCHGRNL (72 aa)). Cys-1097, Cys-1099, Cys-1108, and His-1109 together coordinate Zn(2+). Residues 1103-1113 (KKFKQCHGRNL) are compositionally biased toward basic residues.

It belongs to the SecA family. Monomer and homodimer. Part of the essential Sec protein translocation apparatus which comprises SecA, SecYEG and auxiliary proteins SecDF. Other proteins may also be involved. Zn(2+) serves as cofactor.

The protein resides in the cell inner membrane. It localises to the cytoplasm. The enzyme catalyses ATP + H2O + cellular proteinSide 1 = ADP + phosphate + cellular proteinSide 2.. Part of the Sec protein translocase complex. Interacts with the SecYEG preprotein conducting channel. Has a central role in coupling the hydrolysis of ATP to the transfer of proteins into and across the cell membrane, serving as an ATP-driven molecular motor driving the stepwise translocation of polypeptide chains across the membrane. The polypeptide is Protein translocase subunit SecA (Porphyromonas gingivalis (strain ATCC 33277 / DSM 20709 / CIP 103683 / JCM 12257 / NCTC 11834 / 2561)).